The following is a 370-amino-acid chain: Nociceptin receptor (370 aa).

The Extracellular segment spans residues 1–48 (MESLFPAPFWEVLYGSPLQGNLSLLSPNHSLLPPHLLLNASHGAFLPL). 3 N-linked (GlcNAc...) asparagine glycosylation sites follow: Asn-21, Asn-28, and Asn-39. A helical transmembrane segment spans residues 49–74 (GLKVTIVGLYLAVCVGGLLGNCLVMY). The Cytoplasmic portion of the chain corresponds to 75–87 (VILRHTKMKTATN). Residues 88-109 (IYIFNLALADTAVLLTLPFQGT) form a helical membrane-spanning segment. The Extracellular segment spans residues 110 to 124 (DVLLGFWPFGNALCK). Cys-123 and Cys-200 are disulfide-bonded. Residues 125–146 (AVIAIDYYNMFTSAFTLTAMSV) traverse the membrane as a helical segment. Topologically, residues 147–165 (DRYVAICHPIRALDVRTSS) are cytoplasmic. Residues 166-188 (KAQAVNVAIWALASIVGVPVAIM) form a helical membrane-spanning segment. The Extracellular portion of the chain corresponds to 189 to 211 (GSAQVEDEEIECLVEIPAPQDYW). The helical transmembrane segment at 212 to 236 (GPVFAVCIFLFSFVIPVLIISVCYS) threads the bilayer. Over 237–264 (LMVRRLRGVRLLSGSREKDRNLRRITRL) the chain is Cytoplasmic. A helical transmembrane segment spans residues 265–285 (VLVVVAVFVGCWTPVQVFVLV). The Extracellular segment spans residues 286 to 300 (QGLGVQPGSETAVAV). The helical transmembrane segment at 301 to 322 (LRFCTALGYVNSCLNPILYAFL) threads the bilayer. Residues 323–370 (DENFKACFRKFCCAPTRRREMQVSDRVRSIAKDVALACKTSETVPRPA) are Cytoplasmic-facing. The S-palmitoyl cysteine moiety is linked to residue Cys-334.

Belongs to the G-protein coupled receptor 1 family. Phosphorylation at Ser-363 requires GRK3. As to expression, detected in brain cortex, stomach, ileum, jejunum and colon.

The protein resides in the cell membrane. Its subcellular location is the cytoplasmic vesicle. G-protein coupled opioid receptor that functions as a receptor for the endogenous neuropeptide nociceptin. Ligand binding causes a conformation change that triggers signaling via guanine nucleotide-binding proteins (G proteins) and modulates the activity of down-stream effectors. Signaling via G proteins mediates inhibition of adenylate cyclase activity and calcium channel activity. Arrestins modulate signaling via G proteins and mediate the activation of alternative signaling pathways that lead to the activation of MAP kinases. Plays a role in modulating nociception and the perception of pain. Plays a role in the regulation of locomotor activity by the neuropeptide nociceptin. The chain is Nociceptin receptor (OPRL1) from Sus scrofa (Pig).